The following is a 424-amino-acid chain: Imidazolonepropionase (424 aa).

H84 and H86 together coordinate Fe(3+). Zn(2+) contacts are provided by H84 and H86. R93, Y156, and H189 together coordinate 4-imidazolone-5-propanoate. Y156 is a binding site for N-formimidoyl-L-glutamate. H254 serves as a coordination point for Fe(3+). H254 contacts Zn(2+). Residue E257 coordinates 4-imidazolone-5-propanoate. D328 is a Fe(3+) binding site. D328 lines the Zn(2+) pocket. Residues N330 and G332 each contribute to the N-formimidoyl-L-glutamate site. Residue S333 coordinates 4-imidazolone-5-propanoate.

This sequence belongs to the metallo-dependent hydrolases superfamily. HutI family. Zn(2+) is required as a cofactor. It depends on Fe(3+) as a cofactor.

The protein resides in the cytoplasm. It carries out the reaction 4-imidazolone-5-propanoate + H2O = N-formimidoyl-L-glutamate. Its pathway is amino-acid degradation; L-histidine degradation into L-glutamate; N-formimidoyl-L-glutamate from L-histidine: step 3/3. In terms of biological role, catalyzes the hydrolytic cleavage of the carbon-nitrogen bond in imidazolone-5-propanoate to yield N-formimidoyl-L-glutamate. It is the third step in the universal histidine degradation pathway. The protein is Imidazolonepropionase of Geobacillus kaustophilus (strain HTA426).